The primary structure comprises 288 residues: Quinate/shikimate dehydrogenase (288 aa).

Substrate is bound by residues Lys71 and Asp107. NAD(+)-binding positions include 132–135, 155–158, Lys205, 232–235, and Gly255; these read AGGA, NRRD, and CVYN.

Belongs to the shikimate dehydrogenase family. As to quaternary structure, homodimer.

It catalyses the reaction L-quinate + NAD(+) = 3-dehydroquinate + NADH + H(+). The catalysed reaction is L-quinate + NADP(+) = 3-dehydroquinate + NADPH + H(+). It carries out the reaction shikimate + NADP(+) = 3-dehydroshikimate + NADPH + H(+). The enzyme catalyses shikimate + NAD(+) = 3-dehydroshikimate + NADH + H(+). It participates in metabolic intermediate biosynthesis; chorismate biosynthesis; chorismate from D-erythrose 4-phosphate and phosphoenolpyruvate: step 4/7. Functionally, the actual biological function of YdiB remains unclear, nor is it known whether 3-dehydroshikimate or quinate represents the natural substrate. Catalyzes the reversible NAD-dependent reduction of both 3-dehydroshikimate (DHSA) and 3-dehydroquinate to yield shikimate (SA) and quinate, respectively. It can use both NAD or NADP for catalysis, however it has higher catalytic efficiency with NAD. The protein is Quinate/shikimate dehydrogenase of Escherichia coli O139:H28 (strain E24377A / ETEC).